The primary structure comprises 443 residues: Threonine/serine transporter TdcC (443 aa).

Helical transmembrane passes span 22 to 42 (TTWTLGLFGTAIGAGVLFFPI), 44 to 64 (AGFGGLIPILLMLVLAYPIAF), 97 to 117 (GVVITFLYFFAICPLLWIYGV), 140 to 160 (VVALFLLLLMAFVIWFGKDLM), 163 to 183 (VMSYLVWPFIASLVLISLSLI), 207 to 227 (ILVTVWLGISIMVFSFNFSPI), 259 to 279 (ASMLMVAVVMFFAFSCLFTLS), 319 to 339 (ASIIALVAIFKSFFGHYLGTL), 366 to 386 (ISMIFIMGSTWIVAYANPNIL), 389 to 409 (IEAMGAPIIASLLCLLPMYAI), and 423 to 443 (DNVFVTLIGLLTILNIVYKLF).

This sequence belongs to the amino acid/polyamine transporter 2 family. SdaC/TdcC subfamily.

It localises to the cell inner membrane. The enzyme catalyses L-threonine(in) + H(+)(in) = L-threonine(out) + H(+)(out). It catalyses the reaction L-serine(in) + H(+)(in) = L-serine(out) + H(+)(out). In terms of biological role, involved in the import of threonine and serine into the cell, with the concomitant import of a proton (symport system). The polypeptide is Threonine/serine transporter TdcC (Salmonella arizonae (strain ATCC BAA-731 / CDC346-86 / RSK2980)).